The chain runs to 149 residues: Small ribosomal subunit protein bS6 (149 aa).

The segment at Val-93 to Ala-149 is disordered. Basic and acidic residues predominate over residues Gly-94–Ala-149.

This sequence belongs to the bacterial ribosomal protein bS6 family.

In terms of biological role, binds together with bS18 to 16S ribosomal RNA. This Rhizobium meliloti (strain 1021) (Ensifer meliloti) protein is Small ribosomal subunit protein bS6.